A 701-amino-acid chain; its full sequence is MNSLFASTARGLEELLKTELEGLGATDCQVVQGGVHFQGDTRLLYQSLMWSRLASRIMLPLGECRVYSDLDLYLGVQAIPWTEMFNPGATFAVHFSGLNDEIRNSQYGALKVKDAIVDSFTRKNLPRPNVDRESPDLRINVWLNKETAHISLDLSGEGLHLRGYRDGTGMAPIKENLAAAIVMRSGWVPGTPLLDPMCGSGTLLIEAAMLATDRAPGLHRGHWGFGGWAQHDDAIWKEVKAEAQTRARQGLAAYGSRFYGSDVDERVIERARRNARRAGIGELIDFAVKDVAQLNNPLPKGPYGTVISNPPYGERLESEPALIALHSLLGRIMKSQFGGWNLSVFSASPELLSCLQLRADKQFKAKNGPLDCIQKNYHLAESEGGKPAMLAEDFANRLRKNLKKFEKWARQEGIECYRLYDADLPEYNVAIDRYGDWVVVQEYAPPKTVDAHKARQRLFDIIAATIAVLEIAPNKLVLKTRERQKGKNQYQKMAEKGDFIEVQEYNARLWVNLTDYLDTGLFLDHRIARRMLGQMSKGKDFLNLFSYTGSASVHAGLGGARSTTTVDMSRTYLEWAERNLRLNGLTGRAHRLMQADVLGWLRESTEQFDLIFIDPPTFSNSKRMEDAFDVQRDHIRLMTDLKRLLRKGGTIMFSNNKRGFRMDHDGLAALGLKAQEISQKTLSQDFARNRQIHNCWLITAA.

Residues L43–L154 form the THUMP domain.

This sequence belongs to the methyltransferase superfamily. RlmKL family.

The protein localises to the cytoplasm. It catalyses the reaction guanosine(2445) in 23S rRNA + S-adenosyl-L-methionine = N(2)-methylguanosine(2445) in 23S rRNA + S-adenosyl-L-homocysteine + H(+). The enzyme catalyses guanosine(2069) in 23S rRNA + S-adenosyl-L-methionine = N(2)-methylguanosine(2069) in 23S rRNA + S-adenosyl-L-homocysteine + H(+). In terms of biological role, specifically methylates the guanine in position 2445 (m2G2445) and the guanine in position 2069 (m7G2069) of 23S rRNA. This is Ribosomal RNA large subunit methyltransferase K/L from Klebsiella pneumoniae (strain 342).